The sequence spans 485 residues: Apolipoprotein N-acyltransferase (485 aa).

Transmembrane regions (helical) follow at residues 8–28 (IAGA…IAFV), 49–69 (GWLF…VSIH), 76–96 (VPLA…FIAF), 121–141 (WWVV…WLFL), 157–177 (FGIY…YLLV), and 186–206 (IMCL…TFIP). Residues 220-457 (VQGNIGQRLK…RLLLTGQIKP (238 aa)) form the CN hydrolase domain. The active-site Proton acceptor is glutamate 259. Lysine 317 is an active-site residue. The active-site Nucleophile is cysteine 369. A helical transmembrane segment spans residues 464 to 484 (LMRWNYYPVVGIIIIFLLLTF).

The protein belongs to the CN hydrolase family. Apolipoprotein N-acyltransferase subfamily.

It is found in the cell inner membrane. The enzyme catalyses N-terminal S-1,2-diacyl-sn-glyceryl-L-cysteinyl-[lipoprotein] + a glycerophospholipid = N-acyl-S-1,2-diacyl-sn-glyceryl-L-cysteinyl-[lipoprotein] + a 2-acyl-sn-glycero-3-phospholipid + H(+). It functions in the pathway protein modification; lipoprotein biosynthesis (N-acyl transfer). Catalyzes the phospholipid dependent N-acylation of the N-terminal cysteine of apolipoprotein, the last step in lipoprotein maturation. The protein is Apolipoprotein N-acyltransferase of Coxiella burnetii (strain RSA 493 / Nine Mile phase I).